The primary structure comprises 67 residues: ATP synthase F(0) complex subunit 8 (67 aa).

The chain crosses the membrane as a helical span at residues 8-24 (TWFITIISSMITLFILF). Lys54 carries the post-translational modification N6-acetyllysine; alternate. Residue Lys54 is modified to N6-succinyllysine; alternate. At Lys57 the chain carries N6-acetyllysine.

It belongs to the ATPase protein 8 family. In terms of assembly, component of the ATP synthase complex composed at least of ATP5F1A/subunit alpha, ATP5F1B/subunit beta, ATP5MC1/subunit c (homooctomer), MT-ATP6/subunit a, MT-ATP8/subunit 8, ATP5ME/subunit e, ATP5MF/subunit f, ATP5MG/subunit g, ATP5MK/subunit k, ATP5MJ/subunit j, ATP5F1C/subunit gamma, ATP5F1D/subunit delta, ATP5F1E/subunit epsilon, ATP5PF/subunit F6, ATP5PB/subunit b, ATP5PD/subunit d, ATP5PO/subunit OSCP. ATP synthase complex consists of a soluble F(1) head domain (subunits alpha(3) and beta(3)) - the catalytic core - and a membrane F(0) domain - the membrane proton channel (subunits c, a, 8, e, f, g, k and j). These two domains are linked by a central stalk (subunits gamma, delta, and epsilon) rotating inside the F1 region and a stationary peripheral stalk (subunits F6, b, d, and OSCP). Interacts with PRICKLE3.

The protein localises to the mitochondrion membrane. Functionally, subunit 8, of the mitochondrial membrane ATP synthase complex (F(1)F(0) ATP synthase or Complex V) that produces ATP from ADP in the presence of a proton gradient across the membrane which is generated by electron transport complexes of the respiratory chain. ATP synthase complex consist of a soluble F(1) head domain - the catalytic core - and a membrane F(1) domain - the membrane proton channel. These two domains are linked by a central stalk rotating inside the F(1) region and a stationary peripheral stalk. During catalysis, ATP synthesis in the catalytic domain of F(1) is coupled via a rotary mechanism of the central stalk subunits to proton translocation. In vivo, can only synthesize ATP although its ATP hydrolase activity can be activated artificially in vitro. Part of the complex F(0) domain. The sequence is that of ATP synthase F(0) complex subunit 8 from Mus musculus (Mouse).